We begin with the raw amino-acid sequence, 433 residues long: Pyrimidine-nucleoside phosphorylase (433 aa).

81–83 (KHS) provides a ligand contact to phosphate. K(+)-binding residues include Gly88 and Thr90. Residues Thr92, 108-110 (KMS), and Thr120 each bind phosphate. Arg168 and Lys187 together coordinate substrate. Leu243, Ala246, and Glu255 together coordinate K(+).

The protein belongs to the thymidine/pyrimidine-nucleoside phosphorylase family. In terms of assembly, homodimer. It depends on K(+) as a cofactor.

The enzyme catalyses uridine + phosphate = alpha-D-ribose 1-phosphate + uracil. It carries out the reaction thymidine + phosphate = 2-deoxy-alpha-D-ribose 1-phosphate + thymine. The catalysed reaction is 2'-deoxyuridine + phosphate = 2-deoxy-alpha-D-ribose 1-phosphate + uracil. Its function is as follows. Catalyzes phosphorolysis of the pyrimidine nucleosides uridine, thymidine and 2'-deoxyuridine with the formation of the corresponding pyrimidine base and ribose-1-phosphate. This is Pyrimidine-nucleoside phosphorylase (pdp) from Staphylococcus haemolyticus (strain JCSC1435).